The following is a 137-amino-acid chain: Nucleoside diphosphate kinase (137 aa).

ATP contacts are provided by K9, F58, R86, T92, R103, and N113. The active-site Pros-phosphohistidine intermediate is H121.

Belongs to the NDK family. As to quaternary structure, homotetramer. Mg(2+) is required as a cofactor.

It is found in the cytoplasm. It carries out the reaction a 2'-deoxyribonucleoside 5'-diphosphate + ATP = a 2'-deoxyribonucleoside 5'-triphosphate + ADP. The enzyme catalyses a ribonucleoside 5'-diphosphate + ATP = a ribonucleoside 5'-triphosphate + ADP. Its function is as follows. Major role in the synthesis of nucleoside triphosphates other than ATP. The ATP gamma phosphate is transferred to the NDP beta phosphate via a ping-pong mechanism, using a phosphorylated active-site intermediate. The chain is Nucleoside diphosphate kinase from Streptococcus pneumoniae (strain Hungary19A-6).